A 30-amino-acid chain; its full sequence is Photosystem I reaction center subunit XII (30 aa).

A helical membrane pass occupies residues 7–29 (IYTVLCIALLAGILAIRLGSTLY).

It belongs to the PsaM family.

The protein resides in the plastid. It localises to the chloroplast thylakoid membrane. The sequence is that of Photosystem I reaction center subunit XII from Phaeodactylum tricornutum (strain CCAP 1055/1).